The chain runs to 417 residues: Serine hydroxymethyltransferase (417 aa).

(6S)-5,6,7,8-tetrahydrofolate contacts are provided by residues Leu-121 and 125-127; that span reads GHL. At Lys-229 the chain carries N6-(pyridoxal phosphate)lysine. Position 355–357 (355–357) interacts with (6S)-5,6,7,8-tetrahydrofolate; that stretch reads SPF.

This sequence belongs to the SHMT family. In terms of assembly, homodimer. Requires pyridoxal 5'-phosphate as cofactor.

The protein localises to the cytoplasm. The enzyme catalyses (6R)-5,10-methylene-5,6,7,8-tetrahydrofolate + glycine + H2O = (6S)-5,6,7,8-tetrahydrofolate + L-serine. It participates in one-carbon metabolism; tetrahydrofolate interconversion. The protein operates within amino-acid biosynthesis; glycine biosynthesis; glycine from L-serine: step 1/1. In terms of biological role, catalyzes the reversible interconversion of serine and glycine with tetrahydrofolate (THF) serving as the one-carbon carrier. This reaction serves as the major source of one-carbon groups required for the biosynthesis of purines, thymidylate, methionine, and other important biomolecules. Also exhibits THF-independent aldolase activity toward beta-hydroxyamino acids, producing glycine and aldehydes, via a retro-aldol mechanism. This is Serine hydroxymethyltransferase from Shewanella frigidimarina (strain NCIMB 400).